We begin with the raw amino-acid sequence, 164 residues long: Cyclin-dependent kinase inhibitor 1 (164 aa).

S2 carries the N-acetylserine modification. Residue S2 forms a Glycyl serine ester (Ser-Gly) (interchain with G-Cter in ubiquitin) linkage. The C4-type zinc finger occupies 13-41 (CGSKACRRLFGPVDSEQLSRDCDALMAGC). A required for binding cyclins region spans residues 17-24 (ACRRLFGP). Residues 53 to 58 (FVTETP) form a required for binding CDKs region. The tract at residues 76–164 (LYLPTGPRRG…RRLIFSKRKP (89 aa)) is disordered. T80 carries the post-translational modification Phosphothreonine; by LKB1. S114 bears the Phosphoserine; by GSK3-beta mark. At S130 the chain carries Phosphoserine. The PIP-box K+4 motif signature appears at 140–164 (RKRRQTSMTDFYHSKRRLIFSKRKP). The short motif at 141–156 (KRRQTSMTDFYHSKRR) is the Nuclear localization signal element. Position 145 is a phosphothreonine; by PKA, PKB/AKT1, PIM1 and PIM2 (T145). S146 carries the phosphoserine; by PKC and NUAK1 modification. The segment at 152–164 (HSKRRLIFSKRKP) is interaction with TRIM39. Residues 153–164 (SKRRLIFSKRKP) show a composition bias toward basic residues. S160 carries the phosphoserine; by PKC; in vitro modification.

The protein belongs to the CDI family. As to quaternary structure, interacts with HDAC1; the interaction is prevented by competitive binding of C10orf90/FATS to HDAC1 facilitating acetylation and protein stabilization of CDKN1A/p21. Interacts with MKRN1. Interacts with PSMA3. Interacts with PCNA. Component of the ternary complex, cyclin D-CDK4-CDKN1A. Interacts (via its N-terminal domain) with CDK4; the interaction promotes the assembly of the cyclin D-CDK4 complex, its nuclear translocation and promotes the cyclin D-dependent enzyme activity of CDK4. Binding to CDK2 leads to CDK2/cyclin E inactivation at the G1-S phase DNA damage checkpoint, thereby arresting cells at the G1-S transition during DNA repair. Interacts with PIM1. Interacts with STK11 and NUAK1. Interacts wih DTL. Interacts with isoform 1 and isoform 2 of TRIM39. Interacts with PKP3; the interaction sequesters CDKN1A to the cytoplasm thereby repressing its role as an inhibitor of CDK4- and CDK6-driven RB1 phosphorylation. Phosphorylation of Thr-145 by Akt or of Ser-146 by PKC impairs binding to PCNA. Phosphorylation at Ser-114 by GSK3-beta enhances ubiquitination by the DCX(DTL) complex. Phosphorylation of Thr-145 by PIM2 enhances CDKN1A stability and inhibits cell proliferation. Phosphorylation of Thr-145 by PIM1 results in the relocation of CDKN1A to the cytoplasm and enhanced CDKN1A protein stability. UV radiation-induced phosphorylation at Thr-80 by LKB1 and at Ser-146 by NUAK1 leads to its degradation. Post-translationally, ubiquitinated by MKRN1; leading to polyubiquitination and 26S proteasome-dependent degradation. Ubiquitinated by the DCX(DTL) complex, also named CRL4(CDT2) complex, leading to its degradation during S phase or following UV irradiation. Ubiquitination by the DCX(DTL) complex is essential to control replication licensing and is PCNA-dependent: interacts with PCNA via its PIP-box, while the presence of the containing the 'K+4' motif in the PIP box, recruit the DCX(DTL) complex, leading to its degradation. Ubiquitination at Ser-2 leads to degradation by the proteasome pathway. Ubiquitinated by RNF114; leading to proteasomal degradation. In terms of processing, acetylation leads to protein stability. Acetylated in vitro on Lys-141, Lys-154, Lys-161 and Lys-163. Deacetylation by HDAC1 is prevented by competitive binding of C10orf90/FATS to HDAC1. Expressed in all adult tissues, with 5-fold lower levels observed in the brain.

The protein localises to the cytoplasm. It is found in the nucleus. Functionally, plays an important role in controlling cell cycle progression and DNA damage-induced G2 arrest. Involved in p53/TP53 mediated inhibition of cellular proliferation in response to DNA damage. Also involved in p53-independent DNA damage-induced G2 arrest mediated by CREB3L1 in astrocytes and osteoblasts. Binds to and inhibits cyclin-dependent kinase activity, preventing phosphorylation of critical cyclin-dependent kinase substrates and blocking cell cycle progression. Functions in the nuclear localization and assembly of cyclin D-CDK4 complex and promotes its kinase activity towards RB1. At higher stoichiometric ratios, inhibits the kinase activity of the cyclin D-CDK4 complex. Inhibits DNA synthesis by DNA polymerase delta by competing with POLD3 for PCNA binding. Negatively regulates the CDK4- and CDK6-driven phosphorylation of RB1 in keratinocytes, thereby resulting in the release of E2F1 and subsequent transcription of E2F1-driven G1/S phase promoting genes. The protein is Cyclin-dependent kinase inhibitor 1 of Homo sapiens (Human).